The following is a 344-amino-acid chain: Serine proteinase inhibitor 2 (344 aa).

Belongs to the serpin family. Poxviruses subfamily.

It is found in the host cytoplasm. Functionally, viral serpin that inhibits both cysteine and serine proteinases involved in the regulation of host inflammatory and apoptosis processes. Major anti-apoptotic protein which inhibits both intrinsic and extrinsic pathways and strongly cleaves host CASP1 and CASP8 but is a rather poor inhibitor of host CASP3. Prevents the proteolytic activity of host interleukin-1-beta converting enzyme (ICE) and ICE-like enzymes. Can also block apoptosis through host tumor necrosis factor (TNF) receptor. The inhibition of host ICE is an example of a 'cross-class' interaction, in which a serpin inhibits a non-serine proteinase. Also inhibits granzyme B. This Homo sapiens (Human) protein is Serine proteinase inhibitor 2 (OPG199).